Consider the following 121-residue polypeptide: Small basic protein (121 aa).

A run of 3 helical transmembrane segments spans residues W2 to I22, Y29 to L49, and V57 to V77.

This sequence belongs to the sbp family.

It is found in the cell membrane. In Bacillus subtilis (strain 168), this protein is Small basic protein (sbp).